The following is a 470-amino-acid chain: Glutathione reductase (470 aa).

Residues S16 and G17 each contribute to the FAD site. S16 serves as a coordination point for glutathione. R23 contributes to the glutathione binding site. The FAD site is built by E36, T43, C44, and K52. Cysteines 44 and 49 form a disulfide. Y104 provides a ligand contact to glutathione. A120 provides a ligand contact to FAD. Positions 190, 193, 196, 213, and 219 each coordinate NADP(+). Residue T228 participates in glutathione binding. G280 is an NADP(+) binding site. Position 321 (D321) interacts with FAD. Residue E327 coordinates NADP(+). T329 serves as a coordination point for FAD. R337 lines the glutathione pocket. A362 lines the NADP(+) pocket. K412 contacts glutathione. An FAD-binding site is contributed by H459. The active-site Proton acceptor is H459.

It belongs to the class-I pyridine nucleotide-disulfide oxidoreductase family. As to quaternary structure, homodimer. The cofactor is FAD.

The protein resides in the cytoplasm. It localises to the mitochondrion. The enzyme catalyses 2 glutathione + NADP(+) = glutathione disulfide + NADPH + H(+). In terms of biological role, catalyzes the reduction of glutathione disulfide (GSSG) to reduced glutathione (GSH). Constitutes the major mechanism to maintain a high GSH:GSSG ratio in the cytosol. In Yarrowia lipolytica (strain CLIB 122 / E 150) (Yeast), this protein is Glutathione reductase (GLR1).